The chain runs to 402 residues: Coiled-coil domain-containing protein 188 (402 aa).

Disordered stretches follow at residues 1–30, 50–74, and 108–131; these read MEGL…GGGL, HSVQ…EGEA, and HPGS…PCPC. Residues 154–189 adopt a coiled-coil conformation; the sequence is GLLGSAEQSFLQLEQENHSLKRQNQELREQLGALLG. A helical membrane pass occupies residues 347–363; it reads LLLGALLVWTAAYVYVV.

It localises to the membrane. This Homo sapiens (Human) protein is Coiled-coil domain-containing protein 188.